The following is a 95-amino-acid chain: Mitochondrial import inner membrane translocase subunit TIM13 (95 aa).

The Twin CX3C motif motif lies at 47 to 67 (CFEKCLQSPYKDGNEGCVDQC). Disulfide bonds link cysteine 47/cysteine 67 and cysteine 51/cysteine 63.

This sequence belongs to the small Tim family. Heterohexamer; composed of 3 copies of TIM8 and 3 copies of TIM13, named soluble 70 kDa complex. Associates with the TIM22 complex, whose core is composed of TIM22 and TIM54. Interacts with the transmembrane regions of multi-pass transmembrane proteins in transit.

It localises to the mitochondrion inner membrane. Mitochondrial intermembrane chaperone that participates in the import and insertion of some multi-pass transmembrane proteins into the mitochondrial inner membrane. Also required for the transfer of beta-barrel precursors from the TOM complex to the sorting and assembly machinery (SAM complex) of the outer membrane. Acts as a chaperone-like protein that protects the hydrophobic precursors from aggregation and guide them through the mitochondrial intermembrane space. The TIM8-TIM13 complex is non essential and only mediates the import of few proteins, while the predominant TIM9-TIM10 70 kDa complex is crucial and mediates the import of much more proteins. This chain is Mitochondrial import inner membrane translocase subunit TIM13 (TIM13), found in Candida glabrata (strain ATCC 2001 / BCRC 20586 / JCM 3761 / NBRC 0622 / NRRL Y-65 / CBS 138) (Yeast).